We begin with the raw amino-acid sequence, 78 residues long: Small ribosomal subunit protein bS20 (78 aa).

This sequence belongs to the bacterial ribosomal protein bS20 family.

Functionally, binds directly to 16S ribosomal RNA. This Streptococcus sanguinis (strain SK36) protein is Small ribosomal subunit protein bS20.